The following is a 917-amino-acid chain: MTENNEKVKNSDSANNQSSKNSKFNFNFEDKKVKCAKTILIIIFLAFLSFQMRAQTADMGFTTNEQYLDVFSDDNGRMYLTALDPYYYLRMSENYLENGHTGDTLKNIDGQQVPWDSYKYGPTGARATFNLLSVVTVWVYQVWHAMDSTVTLMNAAFWVPAILSMFLITPIFFTVRRITSSDIGGAVAAILASLSPSIFVKTVAGFSDTPILEILPLLFIVWFIIEAIHYSKEKNYKSLIYGLLATLMLALYPFMWSAWWYGYYIVIAFLVIYAIYKGISYNSIAKYTKSKNNNHKDKIESEKLEMLNILKISGLFIIGGAVLITALYGVSTTMNALQAPLNYLGLDEVSSQTGWPNVLTTVSELDTASLDEIISSSLGSIHLFAIGLIGIFLSLFRKVLTPVKQISNGLAEKLDIKYALLLIIWFAVTFLAASKGVRFVALMVPPLSIGVGIFVGFIEQFIKNNLDKKYEYVAYPTIAIIVLYALFTIYRADSADLVRMLLPSNYVPIAEGIMLASLAVLIIYKVAELIAESNKKLVMNKIFMILLAIGLITPTIATIVPFYSVPTYNDGWGESLEWINTQTPNNSVVTCWWDNGHIYTWKTDRMVTFDGSSQNTPRAYWVGRAFSTSNESLANGIFRMLASSGDKAYTTDSVLIKKTGSIKNTVDVLNEILPLTKSDAQKALKNSSYKFTDTEVSEILDATHPKVTNPDYLITYNRMTSIASVWSYFGNWDFNLPAGTSRSEREAGSFQGLQTYATNINDTLIVRSLIQQTAEYNIYTLIEVRNETLTGAMMAVTNDGQMQTQQLNMHKVKLMVNENGKSKMYNSLADPDGQLSLLIKVDKNSIIGTDGSNNPVYSSSSWMATANLEDSVYSKLHFFDGEGLDTIKLEKESLDPTANGVQPGFKVFSVDYGNYSK.

A compositionally biased stretch (basic and acidic residues) spans 1–10 (MTENNEKVKN). Residues 1–20 (MTENNEKVKNSDSANNQSSK) form a disordered region. Over 1–38 (MTENNEKVKNSDSANNQSSKNSKFNFNFEDKKVKCAKT) the chain is Cytoplasmic. Residues 11–20 (SDSANNQSSK) show a composition bias toward low complexity. The helical transmembrane segment at 39-59 (ILIIIFLAFLSFQMRAQTADM) threads the bilayer. Residues 60–154 (GFTTNEQYLD…AMDSTVTLMN (95 aa)) lie on the Extracellular side of the membrane. Positions 82-84 (ALD) match the DXD motif 1 motif. Asp84 is a Mn(2+) binding site. The helical transmembrane segment at 155-175 (AAFWVPAILSMFLITPIFFTV) threads the bilayer. Residues 176 to 182 (RRITSSD) lie on the Cytoplasmic side of the membrane. A helical transmembrane segment spans residues 183 to 203 (IGGAVAAILASLSPSIFVKTV). Over 204–209 (AGFSDT) the chain is Extracellular. Asp208 lines the Mn(2+) pocket. Positions 208–210 (DTP) match the DXD motif 2 motif. The helical transmembrane segment at 210–230 (PILEILPLLFIVWFIIEAIHY) threads the bilayer. The Cytoplasmic segment spans residues 231–237 (SKEKNYK). The chain crosses the membrane as a helical span at residues 238–260 (SLIYGLLATLMLALYPFMWSAWW). Residues 261–263 (YGY) are Extracellular-facing. A helical transmembrane segment spans residues 264 to 286 (YIVIAFLVIYAIYKGISYNSIAK). The Cytoplasmic segment spans residues 287–308 (YTKSKNNNHKDKIESEKLEMLN). A helical membrane pass occupies residues 309 to 329 (ILKISGLFIIGGAVLITALYG). Residues 330–372 (VSTTMNALQAPLNYLGLDEVSSQTGWPNVLTTVSELDTASLDE) are Extracellular-facing. The TIXE motif signature appears at 361–364 (TVSE). Residue Glu364 coordinates Mn(2+). Residues 373-393 (IISSSLGSIHLFAIGLIGIFL) form a helical membrane-spanning segment. At 394–413 (SLFRKVLTPVKQISNGLAEK) the chain is on the cytoplasmic side. The helical transmembrane segment at 414-434 (LDIKYALLLIIWFAVTFLAAS) threads the bilayer. The Extracellular portion of the chain corresponds to 435–438 (KGVR). Arg438 is an a glycophospholipid binding site. The helical transmembrane segment at 439–459 (FVALMVPPLSIGVGIFVGFIE) threads the bilayer. Over 460–469 (QFIKNNLDKK) the chain is Cytoplasmic. A helical transmembrane segment spans residues 470–490 (YEYVAYPTIAIIVLYALFTIY). The Extracellular segment spans residues 491-506 (RADSADLVRMLLPSNY). A helical membrane pass occupies residues 507–527 (VPIAEGIMLASLAVLIIYKVA). Residues 528 to 541 (ELIAESNKKLVMNK) are Cytoplasmic-facing. Residues 542-562 (IFMILLAIGLITPTIATIVPF) traverse the membrane as a helical segment. Residues 563 to 917 (YSVPTYNDGW…FSVDYGNYSK (355 aa)) lie on the Extracellular side of the membrane. The interacts with target acceptor peptide in protein substrate stretch occupies residues 592 to 594 (WWD). The WWDYG motif motif lies at 592-596 (WWDNG). The MI motif motif lies at 719 to 726 (MTSIASVW).

This sequence belongs to the STT3 family. Mn(2+) serves as cofactor. It depends on Mg(2+) as a cofactor.

Its subcellular location is the cell membrane. It carries out the reaction an archaeal dolichyl phosphooligosaccharide + [protein]-L-asparagine = an archaeal dolichyl phosphate + a glycoprotein with the oligosaccharide chain attached by N-beta-D-glycosyl linkage to a protein L-asparagine.. The protein operates within cell surface structure biogenesis; S-layer biogenesis. Its pathway is protein modification; protein glycosylation. Its function is as follows. Oligosaccharyl transferase (OST) that catalyzes the initial transfer of a defined glycan (ManNAcGlc-2,3-diNAcAGlcNAc in M.voltae) from the lipid carrier dolichol-monophosphate to an asparagine residue within an Asn-X-Ser/Thr consensus motif in nascent polypeptide chains, the first step in protein N-glycosylation. Involved in the assembly of an N-linked disaccharide that decorates the S-layer glycoprotein and flagellins. In Methanococcus voltae, this protein is Dolichyl-phosphooligosaccharide-protein glycotransferase.